Reading from the N-terminus, the 345-residue chain is D-alanine--D-alanine ligase (345 aa).

The region spanning 137 to 342 (KAAFSAAGLP…LEELVHQLLE (206 aa)) is the ATP-grasp domain. Residue 169–224 (ETQLGYPCFIKPANLGSSVGISKATNRSELQAGLDLAASHDSRLLVEKGLQVRELE) coordinates ATP. Mg(2+)-binding residues include Asp-295, Glu-309, and Asn-311.

This sequence belongs to the D-alanine--D-alanine ligase family. The cofactor is Mg(2+). Mn(2+) is required as a cofactor.

It is found in the cytoplasm. The catalysed reaction is 2 D-alanine + ATP = D-alanyl-D-alanine + ADP + phosphate + H(+). The protein operates within cell wall biogenesis; peptidoglycan biosynthesis. Its function is as follows. Cell wall formation. The protein is D-alanine--D-alanine ligase of Synechococcus sp. (strain RCC307).